The chain runs to 577 residues: Moesin (577 aa).

The region spanning Pro-2–Arg-295 is the FERM domain. Phosphoserine is present on Ser-74. Residue Lys-79 is modified to N6-acetyllysine. Lys-83 is subject to N6-succinyllysine. Positions Ile-115–Glu-120 match the [IL]-x-C-x-x-[DE] motif motif. Tyr-116 is modified (phosphotyrosine). Cys-117 bears the S-nitrosocysteine mark. 2 positions are modified to N6-acetyllysine: Lys-139 and Lys-165. Disordered stretches follow at residues Leu-322–Arg-342, Thr-358–Gln-453, and Ser-468–Met-549. The segment covering Thr-358–Glu-401 has biased composition (basic and acidic residues). Residue Ser-407 is modified to Phosphoserine. Composition is skewed to basic and acidic residues over residues Lys-438 to Gln-447 and Ala-492 to Gln-519. The residue at position 527 (Ser-527) is a Phosphoserine. Residues Asn-531 to Met-549 show a composition bias toward basic and acidic residues. Phosphothreonine; by ROCK2 and STK10 is present on Thr-558.

In terms of assembly, in resting T-cells, part of a PAG1-NHERF1-MSN complex which is disrupted upon TCR activation. Interacts with NHERF1. Interacts with PPP1R16B. Interacts with PDZD8. Interacts with SELPLG and SYK; these interactions mediate the activation of SYK by SELPLG. Interacts with PDPN (via cytoplasmic domain); this interaction activates RHOA and promotes epithelial-mesenchymal transition. Interacts with SPN/CD43 cytoplasmic tail. Interacts with CD44. Interacts with ICAM2. Interacts with ICAM3 (via C-terminus). Interacts with PDZD8. Interacts with F-actin. Interacts with CD46. Interacts with PTPN6. In terms of processing, phosphorylation on Thr-558 is crucial for the formation of microvilli-like structures. Phosphorylation by ROCK2 suppresses the head-to-tail association of the N-terminal and C-terminal halves resulting in an opened conformation which is capable of actin and membrane-binding. Phosphorylation on Thr-558 by STK10 negatively regulates lymphocyte migration and polarization. S-nitrosylation of Cys-117 is induced by interferon-gamma and oxidatively-modified low-densitity lipoprotein (LDL(ox)) implicating the iNOS-S100A8/9 transnitrosylase complex.

The protein localises to the cell membrane. It is found in the cytoplasm. The protein resides in the cytoskeleton. It localises to the apical cell membrane. Its subcellular location is the cell projection. The protein localises to the microvillus membrane. It is found in the microvillus. A head-to-tail association, of the N-terminal and C-terminal halves results in a closed conformation (inactive form) which is incapable of actin or membrane-binding. In terms of biological role, ezrin-radixin-moesin (ERM) family protein that connects the actin cytoskeleton to the plasma membrane and thereby regulates the structure and function of specific domains of the cell cortex. Tethers actin filaments by oscillating between a resting and an activated state providing transient interactions between moesin and the actin cytoskeleton. Once phosphorylated on its C-terminal threonine, moesin is activated leading to interaction with F-actin and cytoskeletal rearrangement. These rearrangements regulate many cellular processes, including cell shape determination, membrane transport, and signal transduction. The role of moesin is particularly important in immunity acting on both T and B-cells homeostasis and self-tolerance, regulating lymphocyte egress from lymphoid organs. Modulates phagolysosomal biogenesis in macrophages. Participates also in immunologic synapse formation. The protein is Moesin of Rattus norvegicus (Rat).